Here is a 129-residue protein sequence, read N- to C-terminus: Large ribosomal subunit protein uL22 (129 aa).

The protein belongs to the universal ribosomal protein uL22 family. As to quaternary structure, part of the 50S ribosomal subunit.

Its function is as follows. This protein binds specifically to 23S rRNA; its binding is stimulated by other ribosomal proteins, e.g. L4, L17, and L20. It is important during the early stages of 50S assembly. It makes multiple contacts with different domains of the 23S rRNA in the assembled 50S subunit and ribosome. Functionally, the globular domain of the protein is located near the polypeptide exit tunnel on the outside of the subunit, while an extended beta-hairpin is found that lines the wall of the exit tunnel in the center of the 70S ribosome. The sequence is that of Large ribosomal subunit protein uL22 from Rhizobium meliloti (strain 1021) (Ensifer meliloti).